Reading from the N-terminus, the 161-residue chain is Regulator of ribonuclease activity A (161 aa).

Belongs to the RraA family. Homotrimer. Binds to both RNA-binding sites in the C-terminal region of Rne and to RhlB.

Its subcellular location is the cytoplasm. In terms of biological role, globally modulates RNA abundance by binding to RNase E (Rne) and regulating its endonucleolytic activity. Can modulate Rne action in a substrate-dependent manner by altering the composition of the degradosome. Modulates RNA-binding and helicase activities of the degradosome. This chain is Regulator of ribonuclease activity A, found in Tolumonas auensis (strain DSM 9187 / NBRC 110442 / TA 4).